We begin with the raw amino-acid sequence, 254 residues long: 3-deoxy-manno-octulosonate cytidylyltransferase (254 aa).

Belongs to the KdsB family.

Its subcellular location is the cytoplasm. The enzyme catalyses 3-deoxy-alpha-D-manno-oct-2-ulosonate + CTP = CMP-3-deoxy-beta-D-manno-octulosonate + diphosphate. It participates in nucleotide-sugar biosynthesis; CMP-3-deoxy-D-manno-octulosonate biosynthesis; CMP-3-deoxy-D-manno-octulosonate from 3-deoxy-D-manno-octulosonate and CTP: step 1/1. Its pathway is bacterial outer membrane biogenesis; lipopolysaccharide biosynthesis. In terms of biological role, activates KDO (a required 8-carbon sugar) for incorporation into bacterial lipopolysaccharide in Gram-negative bacteria. The protein is 3-deoxy-manno-octulosonate cytidylyltransferase of Pseudomonas aeruginosa (strain UCBPP-PA14).